The chain runs to 2473 residues: Reducing polyketide synthase grgA (2473 aa).

The Ketosynthase family 3 (KS3) domain occupies 15 to 446 (REPIAIVGSS…GTNAHAIIES (432 aa)). Active-site for beta-ketoacyl synthase activity residues include C188, H327, and H366. In terms of domain architecture, Malonyl-CoA:ACP transacylase (MAT) spans 559 to 882 (IFTGQGAQWA…SGVLKRGQNA (324 aa)). The tract at residues 956 to 1099 (HELLGHSVTH…GGVRLWLGEP (144 aa)) is N-terminal hotdog fold. Positions 956 to 1260 (HELLGHSVTH…IHLSAVGQRR (305 aa)) are dehydratase (DH) domain. Residues 956–1262 (HELLGHSVTH…LSAVGQRRDP (307 aa)) enclose the PKS/mFAS DH domain. H990 (proton acceptor; for dehydratase activity) is an active-site residue. Positions 1114-1262 (MEALDMEQLY…LSAVGQRRDP (149 aa)) are C-terminal hotdog fold. The Proton donor; for dehydratase activity role is filled by D1172. Positions 1300–1606 (TAYFYLRQLR…PSFCSVIVAQ (307 aa)) are methyltransfrase (MT) domain. Positions 2108–2281 (TYLLCGMTGD…AGSVIHIAIL (174 aa)) constitute a Ketoreductase (KR) domain. One can recognise a Carrier domain in the interval 2388 to 2473 (AECLVILESC…LVEWRRLNKS (86 aa)). At S2426 the chain carries O-(pantetheine 4'-phosphoryl)serine.

Pantetheine 4'-phosphate is required as a cofactor.

It functions in the pathway secondary metabolite biosynthesis. Reducing polyketide synthase; part of the gene cluster that mediates the biosynthesis of gregatin A, a fungal polyketide featuring an alkylated furanone core. The PKS grgA synthesizes C11 and C4 polyketide chains in the presence and absence of the trans-enoyl reductase grgB, respectively. The polyketide transferase grgF is then responsible for the fusion of the two carbon chains to produce the furanone skeleton of gregatin A. Next, the cytochrome P450 monooxygenase grgG accepts performs the oxidative cyclization to furnish the gregatin scaffold and leads to the formation of desmethylgregatin A. Finally, the O-methyltransferase grgD methylates the carboxyl group of desmethylgregatin A to provide gregatin A. This is Reducing polyketide synthase grgA from Penicillium sp.